The following is a 213-amino-acid chain: Thiopurine S-methyltransferase (213 aa).

Positions 10, 45, 66, and 121 each coordinate S-adenosyl-L-methionine.

It belongs to the class I-like SAM-binding methyltransferase superfamily. TPMT family.

The protein resides in the cytoplasm. It catalyses the reaction S-adenosyl-L-methionine + a thiopurine = S-adenosyl-L-homocysteine + a thiopurine S-methylether.. The sequence is that of Thiopurine S-methyltransferase from Aliivibrio salmonicida (strain LFI1238) (Vibrio salmonicida (strain LFI1238)).